A 329-amino-acid polypeptide reads, in one-letter code: Glycerol-3-phosphate dehydrogenase [NAD(P)+] (329 aa).

Positions 11 and 101 each coordinate NADPH. Residues K101, G132, and S134 each coordinate sn-glycerol 3-phosphate. NADPH is bound at residue A136. K188, D241, S251, R252, and N253 together coordinate sn-glycerol 3-phosphate. K188 functions as the Proton acceptor in the catalytic mechanism. R252 serves as a coordination point for NADPH. Positions 276 and 278 each coordinate NADPH.

Belongs to the NAD-dependent glycerol-3-phosphate dehydrogenase family.

The protein resides in the cytoplasm. The enzyme catalyses sn-glycerol 3-phosphate + NAD(+) = dihydroxyacetone phosphate + NADH + H(+). The catalysed reaction is sn-glycerol 3-phosphate + NADP(+) = dihydroxyacetone phosphate + NADPH + H(+). It participates in membrane lipid metabolism; glycerophospholipid metabolism. In terms of biological role, catalyzes the reduction of the glycolytic intermediate dihydroxyacetone phosphate (DHAP) to sn-glycerol 3-phosphate (G3P), the key precursor for phospholipid synthesis. In Phytoplasma australiense, this protein is Glycerol-3-phosphate dehydrogenase [NAD(P)+].